Consider the following 161-residue polypeptide: uncharacterized protein (161 aa).

The interval 126 to 161 (TPSNCGESSTSSGQSSGDESNCSLRTHGVYTRGEQH) is disordered. Residues 128-148 (SNCGESSTSSGQSSGDESNCS) are compositionally biased toward low complexity.

The protein belongs to the herpesviridae US1 family.

This is an uncharacterized protein from Human cytomegalovirus (strain AD169) (HHV-5).